Here is an 880-residue protein sequence, read N- to C-terminus: MOG interacting and ectopic P-granules protein 1 (880 aa).

Polar residues predominate over residues 1 to 20 (MVTSDETVLATTTNKTSITT). Disordered stretches follow at residues 1 to 37 (MVTS…SETD), 82 to 257 (DKVE…DDNE), and 350 to 370 (ERPK…QHNP). Basic and acidic residues predominate over residues 23 to 37 (MEPKSSDESTDSETD). Residues 87-105 (ATNSVVDLSSNGSSATTSV) are compositionally biased toward polar residues. Over residues 108-120 (EEQEEKANEDETN) the composition is skewed to acidic residues. 2 stretches are compositionally biased toward basic and acidic residues: residues 154 to 170 (SKSD…IKDS) and 183 to 193 (KPEEKEEKNDT). The segment covering 215–224 (QLDDDDDDIQ) has biased composition (acidic residues). Basic and acidic residues-rich tracts occupy residues 235 to 252 (QKTE…KAEP) and 350 to 364 (ERPK…ERQQ). C2H2-type zinc fingers lie at residues 436 to 459 (SRCG…ETLH) and 465 to 488 (FQCT…FEAH). The CCHC-type zinc-finger motif lies at 501–523 (YPCAICEEDFNFKGVREQHYKQC). C2H2-type zinc fingers lie at residues 728 to 751 (FQCE…QVLH), 768 to 791 (LACS…VMSH), 809 to 830 (GRCK…VADH), and 841 to 864 (YSCD…SSTH).

In terms of assembly, interacts with hda-1, let-418, lin-1, mog-1, mog-4, mog-5, mog-6, pie-1 and unc-98.

The protein localises to the nucleus. Functionally, has a broad role in development, specifically in the genetic pathway SynMuvB that negatively regulates specification of the vulval cell fate. Required for fem-3 3'-UTR-mediated repression in the regulation of the sperm/oocyte switch. Acts by regulating the translation of fem-3 mRNA, by binding to its 3'-UTR. The sequence is that of MOG interacting and ectopic P-granules protein 1 from Caenorhabditis briggsae.